Here is a 217-residue protein sequence, read N- to C-terminus: Somatotropin (217 aa).

Positions 1-24 (MAAGSWTSLLLAFTLLCLPQLREA) are cleaved as a signal peptide. Histidine 44 is a Zn(2+) binding site. The cysteines at positions 79 and 191 are disulfide-linked. Serine 132 carries the post-translational modification Phosphoserine. Glutamate 200 is a binding site for Zn(2+). Cysteine 208 and cysteine 215 are disulfide-bonded.

It belongs to the somatotropin/prolactin family.

It localises to the secreted. Functionally, plays an important role in growth control. Its major role in stimulating body growth is to stimulate the liver and other tissues to secrete IGF1. It stimulates both the differentiation and proliferation of myoblasts. It also stimulates amino acid uptake and protein synthesis in muscle and other tissues. In Callithrix jacchus (White-tufted-ear marmoset), this protein is Somatotropin (GH1).